A 241-amino-acid chain; its full sequence is Sugar fermentation stimulation protein homolog (241 aa).

The protein belongs to the SfsA family.

The sequence is that of Sugar fermentation stimulation protein homolog from Trichormus variabilis (strain ATCC 29413 / PCC 7937) (Anabaena variabilis).